Reading from the N-terminus, the 252-residue chain is Thiazole synthase (252 aa).

Catalysis depends on K91, which acts as the Schiff-base intermediate with DXP. 1-deoxy-D-xylulose 5-phosphate-binding positions include G152, 179-180 (AG), and 201-202 (NT).

The protein belongs to the ThiG family. In terms of assembly, homotetramer. Forms heterodimers with either ThiH or ThiS.

The protein localises to the cytoplasm. It catalyses the reaction [ThiS sulfur-carrier protein]-C-terminal-Gly-aminoethanethioate + 2-iminoacetate + 1-deoxy-D-xylulose 5-phosphate = [ThiS sulfur-carrier protein]-C-terminal Gly-Gly + 2-[(2R,5Z)-2-carboxy-4-methylthiazol-5(2H)-ylidene]ethyl phosphate + 2 H2O + H(+). It participates in cofactor biosynthesis; thiamine diphosphate biosynthesis. Functionally, catalyzes the rearrangement of 1-deoxy-D-xylulose 5-phosphate (DXP) to produce the thiazole phosphate moiety of thiamine. Sulfur is provided by the thiocarboxylate moiety of the carrier protein ThiS. In vitro, sulfur can be provided by H(2)S. This chain is Thiazole synthase, found in Erwinia amylovora (Fire blight bacteria).